A 286-amino-acid chain; its full sequence is Pyridoxal kinase PdxY (286 aa).

Residues Ser9 and 44-45 (TQ) contribute to the substrate site. ATP contacts are provided by residues Asp111, Ala143, Glu148, Lys181, and 208–211 (RPLV). Substrate is bound at residue Asp223.

It belongs to the pyridoxine kinase family. PdxY subfamily. As to quaternary structure, homodimer. The cofactor is Mg(2+).

The enzyme catalyses pyridoxal + ATP = pyridoxal 5'-phosphate + ADP + H(+). It functions in the pathway cofactor metabolism; pyridoxal 5'-phosphate salvage; pyridoxal 5'-phosphate from pyridoxal: step 1/1. In terms of biological role, pyridoxal kinase involved in the salvage pathway of pyridoxal 5'-phosphate (PLP). Catalyzes the phosphorylation of pyridoxal to PLP. This Yersinia pestis bv. Antiqua (strain Antiqua) protein is Pyridoxal kinase PdxY.